Reading from the N-terminus, the 823-residue chain is Ciliated left-right organizer ZP-N domains-containing protein (823 aa).

The first 22 residues, 1–22 (MWGSPALAWAVWLACVQPTVFP), serve as a signal peptide directing secretion. 4 disordered regions span residues 206-242 (MGLYVDMNATTVTVQSPRQGLLQRWEVLNTSAELLPL), 269-422 (LVHI…DLLH), 434-520 (GPFL…SPSP), and 632-656 (LPREGARGHMDLSSSEPSQDIEGPG). Pro residues predominate over residues 216 to 230 (TVTVQSPRQGLLQRW). Low complexity predominate over residues 389 to 402 (GPETPPAGVPPAAS).

The protein localises to the secreted. Plays a role in left-right patterning process. The protein is Ciliated left-right organizer ZP-N domains-containing protein of Homo sapiens (Human).